Consider the following 124-residue polypeptide: Small ribosomal subunit protein bS16 (124 aa).

Positions 82 to 124 (LAKRPARSNPTKAVPGKKAQERAAEAKQKAEDAAAAAAESAAE) are disordered. Basic and acidic residues predominate over residues 99–113 (KAQERAAEAKQKAED). The span at 114-124 (AAAAAAESAAE) shows a compositional bias: low complexity.

Belongs to the bacterial ribosomal protein bS16 family.

The chain is Small ribosomal subunit protein bS16 from Sinorhizobium fredii (strain NBRC 101917 / NGR234).